Reading from the N-terminus, the 782-residue chain is Endonuclease MutS2 (782 aa).

336–343 (GPNTGGKT) is an ATP binding site. The Smr domain occupies 707-782 (LDLRGYRYEE…GFGVTVAELK (76 aa)).

The protein belongs to the DNA mismatch repair MutS family. MutS2 subfamily. Homodimer. Binds to stalled ribosomes, contacting rRNA.

Its function is as follows. Endonuclease that is involved in the suppression of homologous recombination and thus may have a key role in the control of bacterial genetic diversity. In terms of biological role, acts as a ribosome collision sensor, splitting the ribosome into its 2 subunits. Detects stalled/collided 70S ribosomes which it binds and splits by an ATP-hydrolysis driven conformational change. Acts upstream of the ribosome quality control system (RQC), a ribosome-associated complex that mediates the extraction of incompletely synthesized nascent chains from stalled ribosomes and their subsequent degradation. Probably generates substrates for RQC. This is Endonuclease MutS2 from Staphylococcus epidermidis (strain ATCC 35984 / DSM 28319 / BCRC 17069 / CCUG 31568 / BM 3577 / RP62A).